Reading from the N-terminus, the 692-residue chain is 5-taurinomethyluridine-[tRNA] synthase subunit MTO1, mitochondrial (692 aa).

The N-terminal 25 residues, 1–25 (MFYLRGCGRWVAASFTKQQFPLVRL), are a transit peptide targeting the mitochondrion. FAD contacts are provided by residues 43-48 (GGGHAG), Val-155, Ser-218, and Gln-407. Lys-508 is subject to N6-methyllysine. The disordered stretch occupies residues 669–692 (AAMNESPKTDQCLRNADRLQERQL). Residues 683–692 (NADRLQERQL) show a composition bias toward basic and acidic residues.

Belongs to the MnmG family. In terms of assembly, homodimer; forms a dimer in the presence of potassium. Interacts with GTPBP3; forms the GTPBP3-MTO1 complex composed of homodimers of GTPBP3 and MTO1. It depends on FAD as a cofactor.

The protein localises to the mitochondrion. The catalysed reaction is 5,10-methylenetetrahydrofolate + uridine(34) in tRNA + taurine + GTP + A + H2O = 5-taurinomethyluridine(34) in tRNA + 7,8-dihydrofolate + GDP + AH2 + phosphate + H(+). Component of the GTPBP3-MTO1 complex that catalyzes the 5-taurinomethyluridine (taum(5)U) modification at the 34th wobble position (U34) of mitochondrial tRNAs (mt-tRNAs), which plays a role in mt-tRNA decoding and mitochondrial translation. Taum(5)U formation on mammalian mt-tRNA requires the presence of both GTPBP3-mediated GTPase activity and MTO1 catalytic activity. In Macaca fascicularis (Crab-eating macaque), this protein is 5-taurinomethyluridine-[tRNA] synthase subunit MTO1, mitochondrial (MTO1).